A 1079-amino-acid polypeptide reads, in one-letter code: Tudor domain-containing protein 7 (1079 aa).

Residues methionine 1–lysine 69 enclose the HTH OST-type 1 domain. The segment at lysine 109–proline 132 is disordered. HTH OST-type domains follow at residues aspartate 218 to threonine 288 and proline 330 to serine 398. Tudor domains lie at proline 494–leucine 551 and leucine 684–aspartate 741.

It belongs to the TDRD7 family.

The protein localises to the cytoplasm. Component of specific cytoplasmic RNA granules involved in post-transcriptional regulation of specific genes: probably acts by binding to specific mRNAs and regulating their translation. Probably required during spermatogenesis. In Xenopus laevis (African clawed frog), this protein is Tudor domain-containing protein 7 (tdrd7).